Reading from the N-terminus, the 567-residue chain is Probable serine/threonine-protein kinase WNK6 (567 aa).

Residues 28–285 (IRYKEVIGKG…AKELLLDPFL (258 aa)) form the Protein kinase domain. ATP is bound by residues 108-111 (TELF) and Lys-158. Catalysis depends on Asp-175, which acts as the Proton acceptor. The span at 499 to 509 (VDATKGEDKSS) shows a compositional bias: basic and acidic residues. The disordered stretch occupies residues 499 to 528 (VDATKGEDKSSIQEVEEATEPVSLEEEERL). The segment covering 512–525 (EVEEATEPVSLEEE) has biased composition (acidic residues). Residues 519 to 553 (PVSLEEEERLRQELEEIEAKYQEDMKEIATKREEA) adopt a coiled-coil conformation.

The protein belongs to the protein kinase superfamily. Ser/Thr protein kinase family. WNK subfamily.

The catalysed reaction is L-seryl-[protein] + ATP = O-phospho-L-seryl-[protein] + ADP + H(+). It catalyses the reaction L-threonyl-[protein] + ATP = O-phospho-L-threonyl-[protein] + ADP + H(+). May regulate flowering time by modulating the photoperiod pathway. In Arabidopsis thaliana (Mouse-ear cress), this protein is Probable serine/threonine-protein kinase WNK6 (WNK6).